A 247-amino-acid polypeptide reads, in one-letter code: tRNA pseudouridine synthase A (247 aa).

The active-site Nucleophile is the Asp-53. A substrate-binding site is contributed by Tyr-111.

Belongs to the tRNA pseudouridine synthase TruA family. Homodimer.

The catalysed reaction is uridine(38/39/40) in tRNA = pseudouridine(38/39/40) in tRNA. In terms of biological role, formation of pseudouridine at positions 38, 39 and 40 in the anticodon stem and loop of transfer RNAs. This Bacillus subtilis (strain 168) protein is tRNA pseudouridine synthase A.